The following is a 398-amino-acid chain: Autophagy-related protein 39 (398 aa).

An ATG8-binding motif is present at residues 8 to 11 (WNLV). The disordered stretch occupies residues 15–50 (RLRKGREGEEQSSKSEISLDSLHESSFAGEDDEDFD). An ATG11-binding motif is present at residues 52-59 (DVLSNTSS). Residues 148-164 (VIMLSSLLSMTFSYLAL) traverse the membrane as a helical segment.

Interacts with ATG8 and ATG11.

The protein localises to the endoplasmic reticulum membrane. It localises to the preautophagosomal structure membrane. Functionally, acts as a receptor for reticulophagy and nucleophagy. Directs autophagic sequestration of double-membrane vesicles derived from the nuclear envelope and perinuclear endoplasmic reticulum (pnER) into autophagosomes. Is not required for the cytoplasm-to-vacuole targeting pathway, mitophagy, pexophagy, and non-selective autophagy. In Saccharomyces cerevisiae (strain ATCC 204508 / S288c) (Baker's yeast), this protein is Autophagy-related protein 39.